The following is an 877-amino-acid chain: MTKFTTEEVRSKFITYFKANNHTHVPASSLIPHNDPSLMFVNSGMVQFKNVFTGQGKRPYNKAVTSQKSLRAGGKHNDLENVGYTARHHTFFEMLGNFSFGDYFKEQAIYYAWNLLTKEFELPKDKLYATIYHTDDEAAAYWKKIAGFGDDRIIKIKTNDNFWSMGDTGPCGPCSEIFYDHGEQIYGGLPGTKDEDGDRFIEIWNMVFMQYEQIDKDTSIELSQKSIDTGMGLERMTAVLQHVNNNYDIDLFQEIINFTENIVKVKAEGEAKFSYRVIADHLRASSFLIADGVIPSNEGRGYVLRRIMRRSMRHAHMLGSKEPLMYKLLPKLVDLMGNVYPELKRAESFISSILEQEEIRFKATLERGLKLLTEETETLTKGNKLSGEVAFKLYDTYGFPLDLTEDILKNRDIAVDHKGFEEQMLMQKELARKSWLGSGESKTNQLWFDIKEQHGSTEFLGYTLNEAKCKIIALIKNNNLVNDIKEIDTQFLLISNQTPFYGESGGQIGDIGTISAKDSEVEVIDTLKYLGSIIVHKCILKKGQINVGENANFSIDIRYRQNLRIHHSATHILHAVLHEVLGKHVTQKGSLVAPTYLRFDISHSKAVTNEEITLIEDKVNEIIRDNHEVTTTLMATEDAIKQGAMALFGEKYDSEVRVVKMGETSLELCGGTHVRRTGDIGCFKITSESAIAAGVRRIEAVCGEFVITLMRENDSLLKSIESSFKTNKNELITKVNNILERNKEVEKELEKTLLASLDLSIEQIEKQAAQITGIKLLYKKVGNIDNKILRQAAENLTKKVEDLIMVYIAEGIGKLSITVAVSKAITDKYNADIIAKKLSLFLGGSGGGGQASLAQAGGNDIGKLTNIHEKLYSLLTV.

Positions 567, 571, 669, and 673 each coordinate Zn(2+).

This sequence belongs to the class-II aminoacyl-tRNA synthetase family. The cofactor is Zn(2+).

The protein resides in the cytoplasm. The catalysed reaction is tRNA(Ala) + L-alanine + ATP = L-alanyl-tRNA(Ala) + AMP + diphosphate. Catalyzes the attachment of alanine to tRNA(Ala) in a two-step reaction: alanine is first activated by ATP to form Ala-AMP and then transferred to the acceptor end of tRNA(Ala). Also edits incorrectly charged Ser-tRNA(Ala) and Gly-tRNA(Ala) via its editing domain. The polypeptide is Alanine--tRNA ligase (Rickettsia rickettsii (strain Iowa)).